The sequence spans 357 residues: Dual-specificity RNA methyltransferase RlmN (357 aa).

Catalysis depends on E89, which acts as the Proton acceptor. Positions 109-340 (EGEKYTVCVS…CTIRESKALD (232 aa)) constitute a Radical SAM core domain. C116 and C345 are oxidised to a cystine. C123, C127, and C130 together coordinate [4Fe-4S] cluster. S-adenosyl-L-methionine is bound by residues 173–174 (GE), S203, 226–228 (SLH), and N302. The active-site S-methylcysteine intermediate is the C345.

Belongs to the radical SAM superfamily. RlmN family. The cofactor is [4Fe-4S] cluster.

The protein resides in the cytoplasm. It carries out the reaction adenosine(2503) in 23S rRNA + 2 reduced [2Fe-2S]-[ferredoxin] + 2 S-adenosyl-L-methionine = 2-methyladenosine(2503) in 23S rRNA + 5'-deoxyadenosine + L-methionine + 2 oxidized [2Fe-2S]-[ferredoxin] + S-adenosyl-L-homocysteine. The enzyme catalyses adenosine(37) in tRNA + 2 reduced [2Fe-2S]-[ferredoxin] + 2 S-adenosyl-L-methionine = 2-methyladenosine(37) in tRNA + 5'-deoxyadenosine + L-methionine + 2 oxidized [2Fe-2S]-[ferredoxin] + S-adenosyl-L-homocysteine. Specifically methylates position 2 of adenine 2503 in 23S rRNA and position 2 of adenine 37 in tRNAs. m2A2503 modification seems to play a crucial role in the proofreading step occurring at the peptidyl transferase center and thus would serve to optimize ribosomal fidelity. The chain is Dual-specificity RNA methyltransferase RlmN from Helicobacter pylori (strain P12).